Here is a 583-residue protein sequence, read N- to C-terminus: Thiol:disulfide interchange protein DsbD (583 aa).

The signal sequence occupies residues 1 to 18 (MRRLFLLLFMLFTTLAHA). 2 disulfide bridges follow: C118/C124 and C186/C306. A run of 8 helical transmembrane segments spans residues 168-188 (GLGL…PCSL), 214-234 (SYVL…ALLG), 245-265 (WVLG…FGFF), 289-309 (LIGC…CMTA), 326-346 (FGGL…LLLV), 359-379 (WMNL…IYML), 382-402 (VLNP…VAYC), and 413-433 (LLHL…MLLV). A Thioredoxin domain is found at 458–581 (VTAHDAFTTV…FLQRWTQTRE (124 aa)). C496 and C499 are joined by a disulfide.

The protein belongs to the thioredoxin family. DsbD subfamily.

Its subcellular location is the cell inner membrane. The enzyme catalyses [protein]-dithiol + NAD(+) = [protein]-disulfide + NADH + H(+). It catalyses the reaction [protein]-dithiol + NADP(+) = [protein]-disulfide + NADPH + H(+). In terms of biological role, required to facilitate the formation of correct disulfide bonds in some periplasmic proteins and for the assembly of the periplasmic c-type cytochromes. Acts by transferring electrons from cytoplasmic thioredoxin to the periplasm. This transfer involves a cascade of disulfide bond formation and reduction steps. This chain is Thiol:disulfide interchange protein DsbD, found in Pseudomonas fluorescens (strain ATCC BAA-477 / NRRL B-23932 / Pf-5).